Here is a 263-residue protein sequence, read N- to C-terminus: MNPNCARCGKIVYPTEKVNCLDKYWHKACFHCETCKMTLNMKNYKGYEKKPYCNAHYPKQSFTMVADTPENLRLKQQSELQSQVRYKEEFEKNKGKGFSVVADTPELQRIKKTQDQISNIKYHEEFEKSRMGPSGGEGVEPERREAQDSSSYRRPTEQQQPQPHHIPTSAPVYQQPQQQQMTSSYGGYKEPAAPVSIQRSAPGGGGKRYRAVYDYSAADEDEVSFQDGDTIVNVQQIDDGWMYGTVERTGDTGMLPANYVEAI.

Met-1 bears the N-acetylmethionine mark. Positions 5 to 56 constitute an LIM zinc-binding domain; that stretch reads CARCGKIVYPTEKVNCLDKYWHKACFHCETCKMTLNMKNYKGYEKKPYCNAH. Lys-42 carries the post-translational modification N6-acetyllysine. 2 Nebulin repeats span residues 61–95 and 97–131; these read SFTM…KNKG and GFSV…KSRM. Thr-68 bears the Phosphothreonine mark. At Lys-75 the chain carries N6-methyllysine. Ser-99 bears the Phosphoserine mark. Thr-104 is modified (phosphothreonine). Position 112 is an N6-succinyllysine (Lys-112). 2 positions are modified to phosphoserine: Ser-118 and Ser-134. The interval 123 to 207 is disordered; that stretch reads HEEFEKSRMG…QRSAPGGGGK (85 aa). The span at 148 to 162 shows a compositional bias: polar residues; sequence DSSSYRRPTEQQQPQ. The residue at position 156 (Thr-156) is a Phosphothreonine; by PKA. Residues 204–263 enclose the SH3 domain; it reads GGGKRYRAVYDYSAADEDEVSFQDGDTIVNVQQIDDGWMYGTVERTGDTGMLPANYVEAI.

As to quaternary structure, interacts with F-actin. Interacts with KBTBD10. Interacts with ANKRD54.

Its subcellular location is the cytoplasm. The protein resides in the cell cortex. The protein localises to the cytoskeleton. Plays an important role in the regulation of dynamic actin-based, cytoskeletal activities. Agonist-dependent changes in LASP1 phosphorylation may also serve to regulate actin-associated ion transport activities, not only in the parietal cell but also in certain other F-actin-rich secretory epithelial cell types. This is LIM and SH3 domain protein 1 (Lasp1) from Mus musculus (Mouse).